A 239-amino-acid chain; its full sequence is uncharacterized protein (239 aa).

This is an uncharacterized protein from Escherichia coli O157:H7.